We begin with the raw amino-acid sequence, 510 residues long: Protein PLASTID TRANSCRIPTIONALLY ACTIVE 16, chloroplastic (510 aa).

Residues 1–14 are compositionally biased toward polar residues; sequence MASSSTSFPLTTAP. The transit peptide at 1–19 directs the protein to the chloroplast; the sequence is MASSSTSFPLTTAPPQGVR. 2 disordered regions span residues 1–24 and 38–58; these read MASSSTSFPLTTAPPQGVRFNRRK and LGKTKGDDDSEGKQKGKNPFQ. Residues 41–51 show a composition bias toward basic and acidic residues; that stretch reads TKGDDDSEGKQ. 94-123 contributes to the NADP(+) binding site; it reads IFVAGATGQAGIRIAQTLLQRGFSVRAGVP. Residues 354–403 are a coiled coil; the sequence is ARERAEEEAKVAADKAREAAEAAKEFEKQMQKLSEKEAEAASLAEDAQQK. Phosphoserine is present on Ser-395. Thr-451 carries the phosphothreonine; by STN7 modification. The segment at 453 to 493 is disordered; sequence RGQAKARNLPPKKAVVKQRPSSPFASKPKEERPKKPEKEVR. The span at 479–493 shows a compositional bias: basic and acidic residues; that stretch reads KPKEERPKKPEKEVR.

This sequence belongs to the NAD(P)-dependent epimerase/dehydratase family. Component of the plastid transcriptionally active chromosome required for plastid gene expression. Interacts with DEGP1 under high light conditions and maybe its degradation target. Excluded from chloroplast nucleoid when phosphorylated on Thr-451 by STN7 that may regulate membrane-anchoring functions of the nucleoid.

The protein localises to the plastid. Its subcellular location is the chloroplast stroma. It is found in the chloroplast nucleoid. The protein resides in the chloroplast thylakoid membrane. Functionally, probably involved in the regulation of plastid gene expression. This Arabidopsis thaliana (Mouse-ear cress) protein is Protein PLASTID TRANSCRIPTIONALLY ACTIVE 16, chloroplastic.